A 460-amino-acid polypeptide reads, in one-letter code: 3-isopropylmalate dehydratase large subunit (460 aa).

[4Fe-4S] cluster contacts are provided by C341, C401, and C404.

This sequence belongs to the aconitase/IPM isomerase family. LeuC type 1 subfamily. As to quaternary structure, heterodimer of LeuC and LeuD. [4Fe-4S] cluster is required as a cofactor.

The catalysed reaction is (2R,3S)-3-isopropylmalate = (2S)-2-isopropylmalate. The protein operates within amino-acid biosynthesis; L-leucine biosynthesis; L-leucine from 3-methyl-2-oxobutanoate: step 2/4. Catalyzes the isomerization between 2-isopropylmalate and 3-isopropylmalate, via the formation of 2-isopropylmaleate. This Phocaeicola vulgatus (strain ATCC 8482 / DSM 1447 / JCM 5826 / CCUG 4940 / NBRC 14291 / NCTC 11154) (Bacteroides vulgatus) protein is 3-isopropylmalate dehydratase large subunit.